A 92-amino-acid chain; its full sequence is PqqA binding protein (92 aa).

The protein belongs to the PqqD family. As to quaternary structure, monomer. Interacts with PqqE.

It functions in the pathway cofactor biosynthesis; pyrroloquinoline quinone biosynthesis. In terms of biological role, functions as a PqqA binding protein and presents PqqA to PqqE, in the pyrroloquinoline quinone (PQQ) biosynthetic pathway. The sequence is that of PqqA binding protein from Pseudomonas aeruginosa (strain UCBPP-PA14).